The sequence spans 72 residues: Long neurotoxin OH-5 (72 aa).

5 cysteine pairs are disulfide-bonded: Cys3-Cys22, Cys15-Cys43, Cys28-Cys32, Cys47-Cys58, and Cys59-Cys64.

Belongs to the three-finger toxin family. Long-chain subfamily. Type II alpha-neurotoxin sub-subfamily. Expressed by the venom gland.

It localises to the secreted. Functionally, binds with high affinity to muscular (alpha-1/CHRNA1) and neuronal (alpha-7/CHRNA7) nicotinic acetylcholine receptor (nAChR) and inhibits acetylcholine from binding to the receptor, thereby impairing neuromuscular and neuronal transmission. This is Long neurotoxin OH-5 from Ophiophagus hannah (King cobra).